Here is a 282-residue protein sequence, read N- to C-terminus: Tetraspanin-6 (282 aa).

Residues 1–7 (MYRFSNT) lie on the Cytoplasmic side of the membrane. A helical transmembrane segment spans residues 8 to 28 (VIGVLNLLTLLASIPIIGTAL). Topologically, residues 29 to 44 (YKARSSTTCENFLQTP) are extracellular. A helical transmembrane segment spans residues 45–65 (LLVIGFIILIVSLAGFIGACF). At 66-74 (NVAWALWVY) the chain is on the cytoplasmic side. The chain crosses the membrane as a helical span at residues 75–95 (LVVMIFLIATLMGLTLFGLVV). At 96–220 (TSQGGGVEVP…EIRLDWRKLS (125 aa)) the chain is on the extracellular side. Residues 221–241 (VVNILVLVLLIAVYAAGCCAF) traverse the membrane as a helical segment. Topologically, residues 242 to 282 (HNTRHAAHPYHPSDDNRMTRVRPRWDYYWWRWWHEKKEQLY) are cytoplasmic.

This sequence belongs to the tetraspanin (TM4SF) family.

The protein resides in the membrane. Functionally, may be involved in the regulation of cell differentiation. The protein is Tetraspanin-6 (TET6) of Arabidopsis thaliana (Mouse-ear cress).